Consider the following 436-residue polypeptide: GTPase Der (436 aa).

2 consecutive EngA-type G domains span residues 4–167 (PTIA…PNEE) and 175–351 (IKFS…QSQN). GTP is bound by residues 10–17 (GRPNVGKS), 57–61 (DTGGI), 119–122 (NKVD), 181–188 (GRPNVGKS), 229–233 (DTAGM), and 294–297 (NKWD). Residues 352–436 (TRIPSAVLND…PIHLIARKRK (85 aa)) form the KH-like domain.

This sequence belongs to the TRAFAC class TrmE-Era-EngA-EngB-Septin-like GTPase superfamily. EngA (Der) GTPase family. In terms of assembly, associates with the 50S ribosomal subunit.

Its function is as follows. GTPase that plays an essential role in the late steps of ribosome biogenesis. In Streptococcus sanguinis (strain SK36), this protein is GTPase Der.